The primary structure comprises 267 residues: 3-methyl-2-oxobutanoate hydroxymethyltransferase (267 aa).

Aspartate 46 and aspartate 85 together coordinate Mg(2+). 3-methyl-2-oxobutanoate-binding positions include 46–47 (DS), aspartate 85, and lysine 115. Glutamate 117 lines the Mg(2+) pocket. The active-site Proton acceptor is glutamate 184.

The protein belongs to the PanB family. Homodecamer; pentamer of dimers. The cofactor is Mg(2+).

Its subcellular location is the cytoplasm. The enzyme catalyses 3-methyl-2-oxobutanoate + (6R)-5,10-methylene-5,6,7,8-tetrahydrofolate + H2O = 2-dehydropantoate + (6S)-5,6,7,8-tetrahydrofolate. It participates in cofactor biosynthesis; (R)-pantothenate biosynthesis; (R)-pantoate from 3-methyl-2-oxobutanoate: step 1/2. Catalyzes the reversible reaction in which hydroxymethyl group from 5,10-methylenetetrahydrofolate is transferred onto alpha-ketoisovalerate to form ketopantoate. This chain is 3-methyl-2-oxobutanoate hydroxymethyltransferase, found in Geobacter metallireducens (strain ATCC 53774 / DSM 7210 / GS-15).